We begin with the raw amino-acid sequence, 615 residues long: Delta-like protein B (615 aa).

The signal sequence occupies residues 1–20 (MAHLSLYCLLSVSLLQLVAS). Over 21–522 (SGVFELKVHS…VGQTSPSAVA (502 aa)) the chain is Extracellular. One can recognise a DSL domain in the interval 159 to 203 (VFCDEFYFGEACSDYCRPRDDTLGHYTCDENGNKECLVGWQGDYC). 26 cysteine pairs are disulfide-bonded: C161–C170, C174–C186, C194–C203, C208–C219, C212–C225, C227–C236, C245–C250, C258–C267, C274–C286, C280–C296, C298–C307, C314–C325, C319–C334, C336–C345, C352–C363, C357–C373, C375–C384, C391–C402, C396–C411, C413–C422, C429–C440, C434–C449, C451–C460, C467–C478, C472–C487, and C489–C498. EGF-like domains are found at residues 204–237 (SDPI…PSCS), 241–268 (HYPG…LFCN), and 270–308 (DLNY…TNCE). The 37-residue stretch at 310–346 (EINECDCNPCKNGGSCNDLENDYSCTCPQGFYGKNCE) folds into the EGF-like 4; calcium-binding domain. EGF-like domains follow at residues 348-385 (IAMT…SNCE) and 387-423 (RLDR…SRCE). Residues 425–461 (NIDDCARYPCQNAGTCQDGINDYTCTCTLGFTGKNCS) form the EGF-like 7; calcium-binding domain. N459 is a glycosylation site (N-linked (GlcNAc...) asparagine). The EGF-like 8 domain maps to 463-499 (RADACLTNPCLHGGTCFTHFSGPVCQCVPGFMGSTCE). The helical transmembrane segment at 523–543 (VSCVLGVLAVFLGVCVGLVVL) threads the bilayer. Over 544–615 (RRRRHRLRRQ…FLWSAGGGLR (72 aa)) the chain is Cytoplasmic.

Post-translationally, ubiquitinated by mib, leading to its endocytosis and subsequent degradation.

It is found in the membrane. In terms of biological role, acts as a ligand for Notch receptors and is involved in primary neurogenesis. Can activate Notch receptors, thereby playing a key role in lateral inhibition, a process that prevents the immediate neighbors of each nascent neural cell from simultaneously embarking on neural differentiation. This is Delta-like protein B (dlb) from Danio rerio (Zebrafish).